A 260-amino-acid chain; its full sequence is Thiazole synthase (260 aa).

The active-site Schiff-base intermediate with DXP is Lys-96. Residues Gly-157, 184–185 (AG), and 206–207 (NT) each bind 1-deoxy-D-xylulose 5-phosphate.

Belongs to the ThiG family. In terms of assembly, homotetramer. Forms heterodimers with either ThiH or ThiS.

The protein localises to the cytoplasm. The catalysed reaction is [ThiS sulfur-carrier protein]-C-terminal-Gly-aminoethanethioate + 2-iminoacetate + 1-deoxy-D-xylulose 5-phosphate = [ThiS sulfur-carrier protein]-C-terminal Gly-Gly + 2-[(2R,5Z)-2-carboxy-4-methylthiazol-5(2H)-ylidene]ethyl phosphate + 2 H2O + H(+). It participates in cofactor biosynthesis; thiamine diphosphate biosynthesis. Functionally, catalyzes the rearrangement of 1-deoxy-D-xylulose 5-phosphate (DXP) to produce the thiazole phosphate moiety of thiamine. Sulfur is provided by the thiocarboxylate moiety of the carrier protein ThiS. In vitro, sulfur can be provided by H(2)S. This Rhodopseudomonas palustris (strain ATCC BAA-98 / CGA009) protein is Thiazole synthase.